Here is a 351-residue protein sequence, read N- to C-terminus: MSDKNQIAARASLIEQLMSKRNFEDLGNHLTELETIYVTKEHLQETDVVRAVYRVLKNCPSVALKKKAKCLLSKWKAVYKQTHSKARNSPKLFPVRGNKEENSGPSHDPSQNETLGICSSNSLSSQDVAKLSEMIVPENRAIQLKPKEEHFGDGDPESTGKRSSELLDPTTPMRTKCIELLYAALTSSSTDQPKADLWQNFAREIEEHVFTLYSKNIKKYKTCIRSKVANLKNPRNSHLQQNLLSGTTSPREFAEMTVMEMANKELKQLRASYTESCIQEHYLPQVIDGTQTNKIKCRRCEKYNCKVTVIDRGTLFLPSWVRNSNPDEQMMTYVICNECGEQWYHSKWVCW.

The 78-residue stretch at 5 to 82 (NQIAARASLI…SKWKAVYKQT (78 aa)) folds into the TFIIS N-terminal domain. Disordered stretches follow at residues 86–119 (ARNS…GICS) and 144–169 (LKPK…LLDP). Residues 103 to 119 (SGPSHDPSQNETLGICS) show a composition bias toward polar residues. Positions 145-165 (KPKEEHFGDGDPESTGKRSSE) are enriched in basic and acidic residues. A TFIIS central domain is found at 173-289 (MRTKCIELLY…EHYLPQVIDG (117 aa)).

The polypeptide is Transcription elongation factor A N-terminal and central domain-containing protein (TCEANC) (Homo sapiens (Human)).